The chain runs to 342 residues: Autoinducer 2 import system permease protein LsrC (342 aa).

The Periplasmic segment spans residues 1-13 (MLKFIQNNREITA). The chain crosses the membrane as a helical span at residues 14 to 34 (LLAVVLLFVLPGFLDRQYLSV). Residues 35-38 (QTLT) lie on the Cytoplasmic side of the membrane. A helical transmembrane segment spans residues 39-59 (MVYSSAQILILLAMGATLVML). The Periplasmic segment spans residues 60–69 (TRNIDVSVGS). Residues 70–90 (ITGMCAVLLGMLLNAGYSLPV) form a helical membrane-spanning segment. The Cytoplasmic portion of the chain corresponds to 91-92 (AC). A helical membrane pass occupies residues 93-113 (VATLLLGLLAGFFNGALVAWL). Position 114 (Lys-114) is a topological domain, periplasmic. A helical membrane pass occupies residues 115-135 (IPAIVATLGTLGLYRGIMLLW). Over 136–154 (TGGKWIEGLPAELKQLSAP) the chain is Cytoplasmic. A helical membrane pass occupies residues 155 to 175 (LLLGISAIGWLTIILVAFMAW). The Periplasmic portion of the chain corresponds to 176 to 212 (LLAKTAFGRSFYATGDNLQGARQLGVRTEAIRIVAFS). The chain crosses the membrane as a helical span at residues 213-233 (LNGCMAALAGIVFASQIGFIL). Over 234–251 (NQTGTGLEMKAIAACVLG) the chain is Cytoplasmic. Residues 252-272 (GISLLGGSGAIIGAVLGAWFL) form a helical membrane-spanning segment. Residues 273–283 (TQIDSVLVLLR) lie on the Periplasmic side of the membrane. A helical membrane pass occupies residues 284 to 304 (IPAWWNDFIAGLVLLAVLVFD). Topologically, residues 305–342 (GRLRCALERNLRRQKYARFMTPPPSVKPASSGKKREAA) are cytoplasmic.

The protein belongs to the binding-protein-dependent transport system permease family. AraH/RbsC subfamily. As to quaternary structure, the complex is composed of two ATP-binding proteins (LsrA), two transmembrane proteins (LsrC and LsrD) and a solute-binding protein (LsrB).

The protein resides in the cell inner membrane. Its function is as follows. Part of the ABC transporter complex LsrABCD involved in autoinducer 2 (AI-2) import. Probably responsible for the translocation of the substrate across the membrane. The protein is Autoinducer 2 import system permease protein LsrC (lsrC) of Shigella flexneri.